The following is a 266-amino-acid chain: ATP synthase subunit a (266 aa).

The next 6 membrane-spanning stretches (helical) occupy residues 38–58, 99–119, 126–146, 162–182, 191–211, and 224–244; these read KQMLLVILSVVIIATFFLLAA, LLFSLFFFILVNNIYGAIPLI, HVGGAYVLAAIVYLTWIAIGV, GVPVYILPIVIPIEIISNFLV, LFATMLAGHLIVMIAGSGIEY, and SVLVLVGAIAMYMLEALIMAL.

It belongs to the ATPase A chain family. In terms of assembly, F-type ATPases have 2 components, CF(1) - the catalytic core - and CF(0) - the membrane proton channel. CF(1) has five subunits: alpha(3), beta(3), gamma(1), delta(1), epsilon(1). CF(0) has three main subunits: a(1), b(2) and c(9-12). The alpha and beta chains form an alternating ring which encloses part of the gamma chain. CF(1) is attached to CF(0) by a central stalk formed by the gamma and epsilon chains, while a peripheral stalk is formed by the delta and b chains.

The protein resides in the cell membrane. Functionally, key component of the proton channel; it plays a direct role in the translocation of protons across the membrane. The chain is ATP synthase subunit a from Arthrobacter sp. (strain FB24).